Consider the following 49-residue polypeptide: Delta-actitoxin-Axm1a (49 aa).

Disulfide bonds link C4–C46, C6–C36, and C29–C47.

This sequence belongs to the sea anemone sodium channel inhibitory toxin family. Type I subfamily.

Its subcellular location is the secreted. It is found in the nematocyst. Functionally, binds specifically to voltage-gated sodium channels (Nav) (site 3), thereby delaying their inactivation. This toxin retains the greatest capacity to discriminate between the cardiac (Nav1.5/SCN5A) and neuronal sodium channels (2.5 nM versus 120 nM, when electrophysiologically tested and 14 nM versus 400 nM, when tested by ion flux), whereas its paralog Anthopleurin-B has the highest affinity of all anemone toxins for the mammalian sodium channel. Its ability to differentiate between cardiac and skeletal channels appears to be associated with domain 4 of the channel. This toxin does not slow or inhibit closed-state inactivation of cardiac sodium channels, but selectively modifies inactivation from the open-state. It does not display phospholipid-binding activities, suggesting that the domain IV S3-S4 linker is located at the extracellular surface and not buried in the phospholipid bilayer. In Anthopleura xanthogrammica (Giant green sea anemone), this protein is Delta-actitoxin-Axm1a.